A 177-amino-acid polypeptide reads, in one-letter code: Large ribosomal subunit protein uL6 (177 aa).

It belongs to the universal ribosomal protein uL6 family. Part of the 50S ribosomal subunit.

Its function is as follows. This protein binds to the 23S rRNA, and is important in its secondary structure. It is located near the subunit interface in the base of the L7/L12 stalk, and near the tRNA binding site of the peptidyltransferase center. This is Large ribosomal subunit protein uL6 from Psychrobacter arcticus (strain DSM 17307 / VKM B-2377 / 273-4).